Here is a 350-residue protein sequence, read N- to C-terminus: 8-amino-7-oxononanoate synthase (350 aa).

77–78 is a binding site for pyridoxal 5'-phosphate; the sequence is GY. Residue H102 coordinates substrate. Pyridoxal 5'-phosphate contacts are provided by residues S150, 175–178, and 204–207; these read DDAH and TLSK. K207 carries the post-translational modification N6-(pyridoxal phosphate)lysine. T316 contributes to the substrate binding site.

The protein belongs to the class-II pyridoxal-phosphate-dependent aminotransferase family. BioF subfamily. As to quaternary structure, homodimer. The cofactor is pyridoxal 5'-phosphate.

It carries out the reaction 6-carboxyhexanoyl-[ACP] + L-alanine + H(+) = (8S)-8-amino-7-oxononanoate + holo-[ACP] + CO2. It participates in cofactor biosynthesis; biotin biosynthesis. In terms of biological role, catalyzes the decarboxylative condensation of pimeloyl-[acyl-carrier protein] and L-alanine to produce 8-amino-7-oxononanoate (AON), [acyl-carrier protein], and carbon dioxide. The protein is 8-amino-7-oxononanoate synthase of Methylocella silvestris (strain DSM 15510 / CIP 108128 / LMG 27833 / NCIMB 13906 / BL2).